A 369-amino-acid polypeptide reads, in one-letter code: NADH-quinone oxidoreductase subunit H (369 aa).

Helical transmembrane passes span 20–40 (VLLI…AYLV), 88–108 (ICFL…WAVI), 133–153 (IGVL…IIAG), 179–199 (IGLT…GEIV), 205–225 (MPYW…ISSL), 267–287 (ILIN…PLNI), 293–313 (IPGI…FIWI), and 328–348 (LGWK…SGVL).

It belongs to the complex I subunit 1 family. As to quaternary structure, NDH-1 is composed of 14 different subunits. Subunits NuoA, H, J, K, L, M, N constitute the membrane sector of the complex.

Its subcellular location is the cell inner membrane. It catalyses the reaction a quinone + NADH + 5 H(+)(in) = a quinol + NAD(+) + 4 H(+)(out). Its function is as follows. NDH-1 shuttles electrons from NADH, via FMN and iron-sulfur (Fe-S) centers, to quinones in the respiratory chain. The immediate electron acceptor for the enzyme in this species is believed to be ubiquinone. Couples the redox reaction to proton translocation (for every two electrons transferred, four hydrogen ions are translocated across the cytoplasmic membrane), and thus conserves the redox energy in a proton gradient. This subunit may bind ubiquinone. The protein is NADH-quinone oxidoreductase subunit H of Ehrlichia canis (strain Jake).